A 105-amino-acid chain; its full sequence is Protein U4 (105 aa).

The helical transmembrane segment at 5-25 threads the bilayer; sequence FLLFLLLLVLVINPSLVVNMV.

This sequence belongs to the nanovirus U4 protein family.

The protein resides in the membrane. The chain is Protein U4 (DNA-U4) from Faba bean necrotic yellows virus (isolate Egyptian EV1-93) (FBNYV).